The primary structure comprises 493 residues: Cytochrome P450 monooxygenase mfmF (493 aa).

2 helical membrane passes run 3 to 23 (SLIP…RLFF) and 301 to 321 (VLFA…FHLV). Cys440 contacts heme.

This sequence belongs to the cytochrome P450 family. Heme serves as cofactor.

It is found in the membrane. The protein operates within secondary metabolite biosynthesis; terpenoid biosynthesis. In terms of biological role, cytochrome P450 monooxygenase; part of the gene cluster that mediates the biosynthesis of the phthalide-terpenoid hybrid 11'-O-desmethylfendlerol. Within the pathway, mfmF catalyzes C-3 hydroxylation of 5-hydroxy-4-(hydroxymethyl)-7-methoxy-6-methylphthalide to yield cyclopolic acid. The biosynthesis of 11'-O-desmethylfendlerol begins with the NR-PKS mfmB that forms 3,5-dimethylorsellinic acid (DMOA), which is then transformed into the phthalide 5,7-dihydroxy-4-(hydroxymethyl)-6-methylphthalide by the cytochrome P450 monooxygenase mfmA and the hydrolase mfmC. Subsequently, the methyltransferase mfmE catalyzes 7-O-methylation to yield 5-hydroxy-4-(hydroxymethyl)-7-methoxy-6-methylphthalide, which undergoes C-3 hydroxylation by the cytochrome P450 monooxygenase mfmF. The resultant cyclopolic acid (2,5-dihydroxy-4-(hydroxymethyl)-7-methoxy-6-methylphthalide) is then farnesylated by the DMATS-type prenyltransferase mfmD to afford 5-O-farnesylcyclopolic acid. Finally, the Pyr4-family terpene cyclase mfmH cyclizes the farnesyl moiety of 5-O-farnesylcyclopolic acid into a drimane-like structure, thus completing the biosynthesis of 11'-O-desmethylfendlerol. This is Cytochrome P450 monooxygenase mfmF from Annulohypoxylon moriforme (Filamentous fungus).